The following is a 544-amino-acid chain: Chaperonin GroEL 2 (544 aa).

ATP is bound by residues 29-32 (TLGP), 86-90 (DGTTT), G413, 479-481 (NAA), and D495.

The protein belongs to the chaperonin (HSP60) family. Forms a cylinder of 14 subunits composed of two heptameric rings stacked back-to-back. Interacts with the co-chaperonin GroES.

Its subcellular location is the cytoplasm. It carries out the reaction ATP + H2O + a folded polypeptide = ADP + phosphate + an unfolded polypeptide.. Functionally, together with its co-chaperonin GroES, plays an essential role in assisting protein folding. The GroEL-GroES system forms a nano-cage that allows encapsulation of the non-native substrate proteins and provides a physical environment optimized to promote and accelerate protein folding. The polypeptide is Chaperonin GroEL 2 (Synechococcus sp. (strain CC9605)).